The following is a 525-amino-acid chain: uncharacterized protein (525 aa).

The next 2 helical transmembrane spans lie at 28-48 (FIDV…NLII) and 353-373 (GVNA…LFTP). The region spanning 146–394 (DIKIGKLKVG…ELKIASKMMF (249 aa)) is the Pterin-binding domain.

The protein resides in the cell membrane. Functionally, unknown. Does not possess dihydropteroate synthase (DHPS) activity since it does not catalyze the condensation of 6-hydroxymethyl-7,8-dihydropterin pyrophosphate (DHPP) and 4-aminobenzoate to form 7,8-dihydropteroate. This is an uncharacterized protein from Methanocaldococcus jannaschii (strain ATCC 43067 / DSM 2661 / JAL-1 / JCM 10045 / NBRC 100440) (Methanococcus jannaschii).